The sequence spans 769 residues: Phosphoribosylformylglycinamidine synthase subunit PurL (769 aa).

The span at 1-13 (MTGTPSAPTTSPD) shows a compositional bias: polar residues. A disordered region spans residues 1–30 (MTGTPSAPTTSPDDQADGPGEGTVDRQPYR). Histidine 65 is a catalytic residue. 2 residues coordinate ATP: tyrosine 68 and lysine 109. Glutamate 111 contacts Mg(2+). Substrate-binding positions include 112–115 (SHNH) and arginine 134. The Proton acceptor role is filled by histidine 113. Aspartate 135 serves as a coordination point for Mg(2+). Glutamine 260 provides a ligand contact to substrate. Aspartate 288 is a Mg(2+) binding site. Residue 337–339 (ESQ) coordinates substrate. ATP-binding residues include asparagine 524 and glycine 561. Asparagine 562 is a Mg(2+) binding site. Serine 564 is a substrate binding site.

It belongs to the FGAMS family. Monomer. Part of the FGAM synthase complex composed of 1 PurL, 1 PurQ and 2 PurS subunits.

The protein resides in the cytoplasm. It catalyses the reaction N(2)-formyl-N(1)-(5-phospho-beta-D-ribosyl)glycinamide + L-glutamine + ATP + H2O = 2-formamido-N(1)-(5-O-phospho-beta-D-ribosyl)acetamidine + L-glutamate + ADP + phosphate + H(+). Its pathway is purine metabolism; IMP biosynthesis via de novo pathway; 5-amino-1-(5-phospho-D-ribosyl)imidazole from N(2)-formyl-N(1)-(5-phospho-D-ribosyl)glycinamide: step 1/2. Its function is as follows. Part of the phosphoribosylformylglycinamidine synthase complex involved in the purines biosynthetic pathway. Catalyzes the ATP-dependent conversion of formylglycinamide ribonucleotide (FGAR) and glutamine to yield formylglycinamidine ribonucleotide (FGAM) and glutamate. The FGAM synthase complex is composed of three subunits. PurQ produces an ammonia molecule by converting glutamine to glutamate. PurL transfers the ammonia molecule to FGAR to form FGAM in an ATP-dependent manner. PurS interacts with PurQ and PurL and is thought to assist in the transfer of the ammonia molecule from PurQ to PurL. The chain is Phosphoribosylformylglycinamidine synthase subunit PurL from Parafrankia sp. (strain EAN1pec).